The following is a 212-amino-acid chain: Thymidylate kinase (212 aa).

Residue 10–17 (GGEGSGKT) coordinates ATP.

Belongs to the thymidylate kinase family.

The enzyme catalyses dTMP + ATP = dTDP + ADP. Its function is as follows. Phosphorylation of dTMP to form dTDP in both de novo and salvage pathways of dTTP synthesis. This Marinomonas sp. (strain MWYL1) protein is Thymidylate kinase.